A 497-amino-acid polypeptide reads, in one-letter code: 4,4'-diaponeurosporene oxygenase (497 aa).

7–19 provides a ligand contact to FAD; that stretch reads VIGGGLGGISAAI.

The protein belongs to the carotenoid/retinoid oxidoreductase family. CrtP subfamily. FAD is required as a cofactor.

The catalysed reaction is all-trans-4,4'-diaponeurosporene + 2 AH2 + 2 O2 = 4,4'-diaponeurosporenal + 2 A + 3 H2O. Its pathway is carotenoid biosynthesis; staphyloxanthin biosynthesis; staphyloxanthin from farnesyl diphosphate: step 3/5. Functionally, involved in the biosynthesis of the yellow-orange carotenoid staphyloxanthin, which plays a role in the virulence via its protective function against oxidative stress. Catalyzes the oxidation of the terminal methyl side group of 4,4'-diaponeurosporene to form 4,4'-diaponeurosporen-4-al. The C40 carotenoid lycopene is a poor substrate. This Staphylococcus aureus (strain Mu50 / ATCC 700699) protein is 4,4'-diaponeurosporene oxygenase.